Here is a 351-residue protein sequence, read N- to C-terminus: GDSL esterase/lipase At4g26790 (351 aa).

Positions 1-25 (MQRNRVLAFLLLAAQLLVKIPETCA) are cleaved as a signal peptide. Serine 36 serves as the catalytic Nucleophile. A glycan (N-linked (GlcNAc...) asparagine) is linked at asparagine 118. Catalysis depends on residues aspartate 326 and histidine 329.

This sequence belongs to the 'GDSL' lipolytic enzyme family.

Its subcellular location is the secreted. The chain is GDSL esterase/lipase At4g26790 from Arabidopsis thaliana (Mouse-ear cress).